Consider the following 100-residue polypeptide: NADH-quinone oxidoreductase subunit K (100 aa).

Transmembrane regions (helical) follow at residues 1-21, 28-48, and 64-84; these read MIGL…GLAG, ILLL…GFVA, and FIIA…ILWF.

This sequence belongs to the complex I subunit 4L family. As to quaternary structure, NDH-1 is composed of 14 different subunits. Subunits NuoA, H, J, K, L, M, N constitute the membrane sector of the complex.

The protein localises to the cell inner membrane. It catalyses the reaction a quinone + NADH + 5 H(+)(in) = a quinol + NAD(+) + 4 H(+)(out). Its function is as follows. NDH-1 shuttles electrons from NADH, via FMN and iron-sulfur (Fe-S) centers, to quinones in the respiratory chain. The immediate electron acceptor for the enzyme in this species is believed to be ubiquinone. Couples the redox reaction to proton translocation (for every two electrons transferred, four hydrogen ions are translocated across the cytoplasmic membrane), and thus conserves the redox energy in a proton gradient. The protein is NADH-quinone oxidoreductase subunit K of Helicobacter pylori (strain Shi470).